Consider the following 343-residue polypeptide: Methionine import ATP-binding protein MetN (343 aa).

In terms of domain architecture, ABC transporter spans 2 to 241; that stretch reads IKLSNITKVF…PKTPLAQKFI (240 aa). Residue 40–46 participates in ATP binding; sequence SGAGKST. Positions 265–343 are C2 domain; it reads CVPMLRLEFT…HVKVEVLGYV (79 aa). Residues 278–283 and 295–296 contribute to the L-methionine site; these read VDAPLL and NI.

The protein belongs to the ABC transporter superfamily. Methionine importer (TC 3.A.1.24) family. In terms of assembly, the complex is composed of two ATP-binding proteins (MetN), two transmembrane proteins (MetI) and a solute-binding protein (MetQ).

It localises to the cell inner membrane. The enzyme catalyses L-methionine(out) + ATP + H2O = L-methionine(in) + ADP + phosphate + H(+). It carries out the reaction D-methionine(out) + ATP + H2O = D-methionine(in) + ADP + phosphate + H(+). With respect to regulation, ATPase activity is inhibited by intracellular L-methionine. Binding of methionine to the dimerized C-terminal regulatory domain stabilizes an inward-facing, ATPase-inactive conformation of the transporter, and as a consequence, the rate of ATP hydrolysis decreases. ADP is a competitive inhibitor. In terms of biological role, part of the ABC transporter complex MetNIQ involved in methionine import. Responsible for energy coupling to the transport system. It has also been shown to be involved in formyl-L-methionine transport. In Escherichia coli (strain K12), this protein is Methionine import ATP-binding protein MetN.